Consider the following 841-residue polypeptide: DNA ligase (841 aa).

Residues 54-58 (DAEYD), 103-104 (SL), and Glu143 contribute to the NAD(+) site. Lys145 functions as the N6-AMP-lysine intermediate in the catalytic mechanism. Positions 166, 203, 321, and 345 each coordinate NAD(+). 4 residues coordinate Zn(2+): Cys471, Cys474, Cys489, and Cys495. A disordered region spans residues 554 to 575 (KTVAESDQMPSEGSSVGASGKH). Residues 561–570 (QMPSEGSSVG) show a composition bias toward polar residues. The 78-residue stretch at 764-841 (GINKAVAGKT…SEAELLTLLG (78 aa)) folds into the BRCT domain.

Belongs to the NAD-dependent DNA ligase family. LigA subfamily. The cofactor is Mg(2+). Mn(2+) is required as a cofactor.

It carries out the reaction NAD(+) + (deoxyribonucleotide)n-3'-hydroxyl + 5'-phospho-(deoxyribonucleotide)m = (deoxyribonucleotide)n+m + AMP + beta-nicotinamide D-nucleotide.. Its function is as follows. DNA ligase that catalyzes the formation of phosphodiester linkages between 5'-phosphoryl and 3'-hydroxyl groups in double-stranded DNA using NAD as a coenzyme and as the energy source for the reaction. It is essential for DNA replication and repair of damaged DNA. This Neisseria meningitidis serogroup C (strain 053442) protein is DNA ligase.